A 552-amino-acid polypeptide reads, in one-letter code: Chaperonin GroEL (552 aa).

Residues 29-32, Lys-50, 86-90, Gly-420, and Asp-501 each bind ATP; these read TAGP and DGTTT.

The protein belongs to the chaperonin (HSP60) family. In terms of assembly, forms a cylinder of 14 subunits composed of two heptameric rings stacked back-to-back. Interacts with the co-chaperonin GroES.

It localises to the cytoplasm. The catalysed reaction is ATP + H2O + a folded polypeptide = ADP + phosphate + an unfolded polypeptide.. Functionally, together with its co-chaperonin GroES, plays an essential role in assisting protein folding. The GroEL-GroES system forms a nano-cage that allows encapsulation of the non-native substrate proteins and provides a physical environment optimized to promote and accelerate protein folding. The sequence is that of Chaperonin GroEL from Wolbachia pipientis subsp. Culex pipiens (strain wPip).